A 340-amino-acid polypeptide reads, in one-letter code: Probable dual-specificity RNA methyltransferase RlmN (340 aa).

Residue E91 is the Proton acceptor of the active site. In terms of domain architecture, Radical SAM core spans 97-326 (HSGRVTACIS…CEIRKEKGTD (230 aa)). C104 and C331 form a disulfide bridge. 3 residues coordinate [4Fe-4S] cluster: C111, C115, and C118. Residues 158–159 (GE), S190, 213–215 (SLH), and N289 contribute to the S-adenosyl-L-methionine site. C331 serves as the catalytic S-methylcysteine intermediate.

The protein belongs to the radical SAM superfamily. RlmN family. The cofactor is [4Fe-4S] cluster.

The protein resides in the cytoplasm. It carries out the reaction adenosine(2503) in 23S rRNA + 2 reduced [2Fe-2S]-[ferredoxin] + 2 S-adenosyl-L-methionine = 2-methyladenosine(2503) in 23S rRNA + 5'-deoxyadenosine + L-methionine + 2 oxidized [2Fe-2S]-[ferredoxin] + S-adenosyl-L-homocysteine. The catalysed reaction is adenosine(37) in tRNA + 2 reduced [2Fe-2S]-[ferredoxin] + 2 S-adenosyl-L-methionine = 2-methyladenosine(37) in tRNA + 5'-deoxyadenosine + L-methionine + 2 oxidized [2Fe-2S]-[ferredoxin] + S-adenosyl-L-homocysteine. In terms of biological role, specifically methylates position 2 of adenine 2503 in 23S rRNA and position 2 of adenine 37 in tRNAs. The protein is Probable dual-specificity RNA methyltransferase RlmN of Thermosipho melanesiensis (strain DSM 12029 / CIP 104789 / BI429).